Consider the following 386-residue polypeptide: 8-amino-7-oxononanoate synthase (386 aa).

Arginine 20 serves as a coordination point for substrate. 107-108 (GY) is a binding site for pyridoxal 5'-phosphate. Residue histidine 132 coordinates substrate. Residues serine 178, histidine 206, and threonine 234 each coordinate pyridoxal 5'-phosphate. The residue at position 237 (lysine 237) is an N6-(pyridoxal phosphate)lysine. A substrate-binding site is contributed by threonine 351.

The protein belongs to the class-II pyridoxal-phosphate-dependent aminotransferase family. BioF subfamily. Homodimer. The cofactor is pyridoxal 5'-phosphate.

It catalyses the reaction 6-carboxyhexanoyl-[ACP] + L-alanine + H(+) = (8S)-8-amino-7-oxononanoate + holo-[ACP] + CO2. It functions in the pathway cofactor biosynthesis; biotin biosynthesis. Catalyzes the decarboxylative condensation of pimeloyl-[acyl-carrier protein] and L-alanine to produce 8-amino-7-oxononanoate (AON), [acyl-carrier protein], and carbon dioxide. In Aromatoleum aromaticum (strain DSM 19018 / LMG 30748 / EbN1) (Azoarcus sp. (strain EbN1)), this protein is 8-amino-7-oxononanoate synthase.